Consider the following 498-residue polypeptide: MRINPTTSGSGVSTLEKKNPGRVVQIIGPVLDVAFPPGKMPNIYNALVVQGRDSVGQPINVACEVQQLLGNNRVRAVAMSATDGLTRGMAVIDTGAPISVPVGGATLGRIFNVLGEPVDNLGPVDTSTTSPIHRSAPAFIQLDTKLSIFETGIKVVDLLAPYRRGGKIGLFGGAGVGKTVLIMELINNIAKAHGGVSVFGGVGERTREGNDLYMEMKESGVINKENIAESKVALVYGQMNEPPGARMRVGLTALTMAEYFRDVNEQDVLLFIDNIFRFVQAGSEVSALLGRMPSAVGYQPTLSTEMGSLQERITSTKDGSITSIQAVYVPADDLTDPAPATTFAHLDATTVLSRGLAAKGIYPAVDPLDSTSTMLQPRIVGEEHYETAQRVKQTLQRYKELQDIIAILGLDELSEEDRLLVARARKIERFLSQPFFVAEVFTGSPGKYVGLAETIRGFQLILSGELDGLPEQAFYLVGTIDEATAKAMNLEMESNLKK.

Glycine 172–threonine 179 contacts ATP.

The protein belongs to the ATPase alpha/beta chains family. F-type ATPases have 2 components, CF(1) - the catalytic core - and CF(0) - the membrane proton channel. CF(1) has five subunits: alpha(3), beta(3), gamma(1), delta(1), epsilon(1). CF(0) has four main subunits: a(1), b(1), b'(1) and c(9-12).

It is found in the plastid. Its subcellular location is the chloroplast thylakoid membrane. The catalysed reaction is ATP + H2O + 4 H(+)(in) = ADP + phosphate + 5 H(+)(out). Its function is as follows. Produces ATP from ADP in the presence of a proton gradient across the membrane. The catalytic sites are hosted primarily by the beta subunits. This chain is ATP synthase subunit beta, chloroplastic, found in Solanum bulbocastanum (Wild potato).